A 254-amino-acid chain; its full sequence is MANLSYWLLALFVATWTDVGLCKKRPKPGGWNTGGSRYPGQGSPGGNRYPPQGGGTWGQPHGGGWGQPHGGGWGQPHGGGWGQPHGGGWGQGGGTHNQWNKPSKPKTNMKHVAGAAAAGAVVGGLGGYMLGSAMSRPMLHFGNDWEDRYYRENMNRYPNQVYYRPVDQYNNQNNFVHDCVNITIKQHTVTTTTKGENFTETDVKMMERVVEQMCVTQYQKESQAYYDGRRSSAVLFSSPPVILLISFLIFLIVG.

Positions methionine 1–cysteine 22 are cleaved as a signal peptide. Residues lysine 23–serine 231 are interaction with GRB2, ERI3 and SYN1. Residues arginine 25–lysine 104 are disordered. Repeat copies occupy residues proline 51–glutamine 59, proline 60–glutamine 67, proline 68–glutamine 75, proline 76–glutamine 83, and proline 84–glutamine 91. Positions proline 51–glutamine 91 are 5 X 8 AA tandem repeats of P-H-G-G-G-W-G-Q. Positions glutamine 52–threonine 95 are enriched in gly residues. The Cu(2+) site is built by histidine 61, glycine 62, glycine 63, histidine 69, glycine 70, glycine 71, histidine 77, glycine 78, glycine 79, histidine 85, glycine 86, and glycine 87. Residues glycine 90–serine 231 form a prP27-30 (protease resistant core) region. An intrachain disulfide couples cysteine 179 to cysteine 214. N-linked (GlcNAc...) asparagine glycans are attached at residues asparagine 181 and asparagine 197. Serine 231 carries the GPI-anchor amidated serine lipid modification. A propeptide spans serine 232–glycine 254 (removed in mature form).

This sequence belongs to the prion family. Monomer and homodimer. Has a tendency to aggregate into amyloid fibrils containing a cross-beta spine, formed by a steric zipper of superposed beta-strands. Soluble oligomers may represent an intermediate stage on the path to fibril formation. Copper binding may promote oligomerization. Interacts with GRB2, APP, ERI3/PRNPIP and SYN1. Mislocalized cytosolically exposed PrP interacts with MGRN1; this interaction alters MGRN1 subcellular location and causes lysosomal enlargement. Interacts with KIAA1191.

The protein resides in the cell membrane. It localises to the golgi apparatus. Functionally, its primary physiological function is unclear. Has cytoprotective activity against internal or environmental stresses. May play a role in neuronal development and synaptic plasticity. May be required for neuronal myelin sheath maintenance. May play a role in iron uptake and iron homeostasis. Soluble oligomers are toxic to cultured neuroblastoma cells and induce apoptosis (in vitro). Association with GPC1 (via its heparan sulfate chains) targets PRNP to lipid rafts. Also provides Cu(2+) or Zn(2+) for the ascorbate-mediated GPC1 deaminase degradation of its heparan sulfate side chains. This is Major prion protein (PRNP) from Cricetulus griseus (Chinese hamster).